The following is a 340-amino-acid chain: Ketol-acid reductoisomerase (NADP(+)) (340 aa).

Residues 1-182 (MRVYYDRDCD…GGGRSGIIET (182 aa)) form the KARI N-terminal Rossmann domain. NADP(+)-binding positions include 24-27 (YGSQ), Arg48, Ser51, Ser53, and 83-86 (DELQ). The active site involves His108. Gly134 provides a ligand contact to NADP(+). One can recognise a KARI C-terminal knotted domain in the interval 183–329 (NFREECETDL…ETLRGMMPWI (147 aa)). Mg(2+) is bound by residues Asp191, Glu195, Glu227, and Glu231. Residue Ser252 coordinates substrate.

It belongs to the ketol-acid reductoisomerase family. The cofactor is Mg(2+).

It catalyses the reaction (2R)-2,3-dihydroxy-3-methylbutanoate + NADP(+) = (2S)-2-acetolactate + NADPH + H(+). It carries out the reaction (2R,3R)-2,3-dihydroxy-3-methylpentanoate + NADP(+) = (S)-2-ethyl-2-hydroxy-3-oxobutanoate + NADPH + H(+). It functions in the pathway amino-acid biosynthesis; L-isoleucine biosynthesis; L-isoleucine from 2-oxobutanoate: step 2/4. The protein operates within amino-acid biosynthesis; L-valine biosynthesis; L-valine from pyruvate: step 2/4. Its function is as follows. Involved in the biosynthesis of branched-chain amino acids (BCAA). Catalyzes an alkyl-migration followed by a ketol-acid reduction of (S)-2-acetolactate (S2AL) to yield (R)-2,3-dihydroxy-isovalerate. In the isomerase reaction, S2AL is rearranged via a Mg-dependent methyl migration to produce 3-hydroxy-3-methyl-2-ketobutyrate (HMKB). In the reductase reaction, this 2-ketoacid undergoes a metal-dependent reduction by NADPH to yield (R)-2,3-dihydroxy-isovalerate. The sequence is that of Ketol-acid reductoisomerase (NADP(+)) from Jannaschia sp. (strain CCS1).